The sequence spans 186 residues: Ribosome-recycling factor (186 aa).

It belongs to the RRF family.

The protein resides in the cytoplasm. Its function is as follows. Responsible for the release of ribosomes from messenger RNA at the termination of protein biosynthesis. May increase the efficiency of translation by recycling ribosomes from one round of translation to another. The protein is Ribosome-recycling factor of Rickettsia canadensis (strain McKiel).